We begin with the raw amino-acid sequence, 284 residues long: NAD kinase (284 aa).

Catalysis depends on D70, which acts as the Proton acceptor. Residues 70-71 (DG), 139-140 (NE), K167, D169, L177, 180-185 (TAYNLS), and Q236 contribute to the NAD(+) site.

Belongs to the NAD kinase family. A divalent metal cation serves as cofactor.

It is found in the cytoplasm. It carries out the reaction NAD(+) + ATP = ADP + NADP(+) + H(+). Its function is as follows. Involved in the regulation of the intracellular balance of NAD and NADP, and is a key enzyme in the biosynthesis of NADP. Catalyzes specifically the phosphorylation on 2'-hydroxyl of the adenosine moiety of NAD to yield NADP. This is NAD kinase from Helicobacter pylori (strain HPAG1).